The following is a 226-amino-acid chain: Ribonuclease T (226 aa).

Residues Val-20–Phe-194 form the Exonuclease domain. The Mg(2+) site is built by Asp-23, Glu-25, His-181, and Asp-186. Catalysis depends on His-181, which acts as the Proton donor/acceptor.

The protein belongs to the RNase T family. As to quaternary structure, homodimer. Requires Mg(2+) as cofactor.

In terms of biological role, trims short 3' overhangs of a variety of RNA species, leaving a one or two nucleotide 3' overhang. Responsible for the end-turnover of tRNA: specifically removes the terminal AMP residue from uncharged tRNA (tRNA-C-C-A). Also appears to be involved in tRNA biosynthesis. This is Ribonuclease T from Shewanella denitrificans (strain OS217 / ATCC BAA-1090 / DSM 15013).